Consider the following 215-residue polypeptide: Cytochrome b6 (215 aa).

Residues 32–52 (IFYCLGGITLTCFLVQVATGF) form a helical membrane-spanning segment. Cysteine 35 contributes to the heme c binding site. Heme b-binding residues include histidine 86 and histidine 100. The next 3 helical transmembrane spans lie at 90-110 (ASMM…TGGF), 116-136 (LTWV…VTGY), and 186-206 (LHTF…FPMI). The heme b site is built by histidine 187 and histidine 202.

The protein belongs to the cytochrome b family. PetB subfamily. The 4 large subunits of the cytochrome b6-f complex are cytochrome b6, subunit IV (17 kDa polypeptide, PetD), cytochrome f and the Rieske protein, while the 4 small subunits are PetG, PetL, PetM and PetN. The complex functions as a dimer. Heme b serves as cofactor. Requires heme c as cofactor.

Its subcellular location is the plastid. It localises to the chloroplast thylakoid membrane. In terms of biological role, component of the cytochrome b6-f complex, which mediates electron transfer between photosystem II (PSII) and photosystem I (PSI), cyclic electron flow around PSI, and state transitions. This is Cytochrome b6 from Helianthus annuus (Common sunflower).